Here is a 205-residue protein sequence, read N- to C-terminus: Large ribosomal subunit protein uL4 (205 aa).

This sequence belongs to the universal ribosomal protein uL4 family. In terms of assembly, part of the 50S ribosomal subunit.

Functionally, one of the primary rRNA binding proteins, this protein initially binds near the 5'-end of the 23S rRNA. It is important during the early stages of 50S assembly. It makes multiple contacts with different domains of the 23S rRNA in the assembled 50S subunit and ribosome. Forms part of the polypeptide exit tunnel. The sequence is that of Large ribosomal subunit protein uL4 from Dinoroseobacter shibae (strain DSM 16493 / NCIMB 14021 / DFL 12).